The primary structure comprises 635 residues: MPIQILPPQLANQIAAGEVVERPASVVKELVENSLDAGATRIDIDIERGGAKLIRIRDNGCGISKDDLALALARHATSKISSLEDLEAILSMGFRGEALASISSVSRLILTSRTAEQSEAWQAYAEGRDMAVTIKPAAHPVGSTLEVLDLFYNTPARRKFMRTEKTEFGHIDEVVRRIALARFDVAINLNHNGKLIRQYRAAPDPAQHERRLASICGPAFLQHALAIAWQHGDLNIHGWVADPAASHTLSEMQYCYVNNRMMRDRLINHAIRQAYQDRLNDAQQPAYVLYLDIDPHQVDVNVHPAKHEVRFHQARLVHDFIYQAVTAVLQQTNAPILNISEEGEVDAPRWQQENRVAAGTNKYAQPEAAKSSAAEQAVARERSSARERAALAYKEDHPYQKQQGELYRQLLQPSAAAKPATSPAAIPASSVSSPSIPVQRITQAEEPLHGDNYSFGRVLTVFPPCYALIEYQGGVALLSLAVAERWLKQAQLSPPEEGLRPQPLLIPLKITLDKNEIAACQNHEKLLITMGIELSVEQGRATLRAVSLPLRQQNLQKLIPELLGYLSQHEEISPDTLATWLARHLGSEHEVWNVSQAIQLLTEVERLCPQLVQSPPAGLLQPIDIKAALATLTHE.

It belongs to the DNA mismatch repair MutL/HexB family.

Functionally, this protein is involved in the repair of mismatches in DNA. It is required for dam-dependent methyl-directed DNA mismatch repair. May act as a 'molecular matchmaker', a protein that promotes the formation of a stable complex between two or more DNA-binding proteins in an ATP-dependent manner without itself being part of a final effector complex. The sequence is that of DNA mismatch repair protein MutL from Yersinia pestis bv. Antiqua (strain Angola).